The chain runs to 150 residues: Protein SLM6 (150 aa).

The Extracellular portion of the chain corresponds to 1-76; that stretch reads MCSRFSSTSL…SLLRSGVFPS (76 aa). The chain crosses the membrane as a helical span at residues 77–97; it reads WLFCMFSSILALAISNSFFFF. Topologically, residues 98–104 are cytoplasmic; it reads SSNACFS. The chain crosses the membrane as a helical span at residues 105 to 125; sequence LLFNSFLVTGFSFSADLLVLA. Over 126–150 the chain is Extracellular; sequence AAADTLESNVSNDIGGNCATRLFKL.

The protein localises to the membrane. This chain is Protein SLM6, found in Saccharomyces cerevisiae (strain ATCC 204508 / S288c) (Baker's yeast).